The chain runs to 282 residues: MPELPEVESVRRGLEPYVVGRSFAAVEVHHPRANRGQEAPLSALLVGRKIAAVARRGKFMWLEFADEDHSDPARDVLFIHLGMSGQVRIGEVDSPHVRIAAVLDDTTRLSFVDQRTFGYWRLGPWLSMAHIAPDPLETDFDLTAAGRRLRAKRTVVKAALLDQTVLSGVGNIYADEALWAVQISPLKKASALRQRDAVAVISAAADVMRAALAVGGTSFDALYVNVNGESGYFDRSLHVYGRGGQPCERCGEEILKTVLGGRGTHYCPSCQNRGVGRKSAAN.

Pro2 functions as the Schiff-base intermediate with DNA in the catalytic mechanism. Glu3 functions as the Proton donor in the catalytic mechanism. The Proton donor; for beta-elimination activity role is filled by Lys58. Residues His96, Arg115, and Lys152 each contribute to the DNA site. Residues 238–272 form an FPG-type zinc finger; the sequence is HVYGRGGQPCERCGEEILKTVLGGRGTHYCPSCQN. The Proton donor; for delta-elimination activity role is filled by Arg262.

It belongs to the FPG family. In terms of assembly, monomer. Requires Zn(2+) as cofactor.

It carries out the reaction Hydrolysis of DNA containing ring-opened 7-methylguanine residues, releasing 2,6-diamino-4-hydroxy-5-(N-methyl)formamidopyrimidine.. It catalyses the reaction 2'-deoxyribonucleotide-(2'-deoxyribose 5'-phosphate)-2'-deoxyribonucleotide-DNA = a 3'-end 2'-deoxyribonucleotide-(2,3-dehydro-2,3-deoxyribose 5'-phosphate)-DNA + a 5'-end 5'-phospho-2'-deoxyribonucleoside-DNA + H(+). Functionally, involved in base excision repair of DNA damaged by oxidation or by mutagenic agents. Acts as a DNA glycosylase that recognizes and removes damaged bases. Has a preference for oxidized purines, such as 7,8-dihydro-8-oxoguanine (8-oxoG). Has AP (apurinic/apyrimidinic) lyase activity and introduces nicks in the DNA strand. Cleaves the DNA backbone by beta-delta elimination to generate a single-strand break at the site of the removed base with both 3'- and 5'-phosphates. This is Formamidopyrimidine-DNA glycosylase from Corynebacterium aurimucosum (strain ATCC 700975 / DSM 44827 / CIP 107346 / CN-1) (Corynebacterium nigricans).